Reading from the N-terminus, the 51-residue chain is ATP synthase subunit epsilon-like protein, mitochondrial (51 aa).

At Lys-21 the chain carries N6-acetyllysine.

Belongs to the eukaryotic ATPase epsilon family. F-type ATPases have 2 components, CF(1) - the catalytic core - and CF(0) - the membrane proton channel. CF(1) has five subunits: alpha(3), beta(3), gamma(1), delta(1), epsilon(1). CF(0) seems to have nine subunits: a, b, c, d, e, f, g, F6 and 8 (or A6L).

The protein localises to the mitochondrion inner membrane. Functionally, mitochondrial membrane ATP synthase (F(1)F(0) ATP synthase or Complex V) produces ATP from ADP in the presence of a proton gradient across the membrane which is generated by electron transport complexes of the respiratory chain. F-type ATPases consist of two structural domains, F(1) - containing the extramembraneous catalytic core, and F(0) - containing the membrane proton channel, linked together by a central stalk and a peripheral stalk. During catalysis, ATP synthesis in the catalytic domain of F(1) is coupled via a rotary mechanism of the central stalk subunits to proton translocation. Part of the complex F(1) domain and of the central stalk which is part of the complex rotary element. Rotation of the central stalk against the surrounding alpha(3)beta(3) subunits leads to hydrolysis of ATP in three separate catalytic sites on the beta subunits. The protein is ATP synthase subunit epsilon-like protein, mitochondrial of Homo sapiens (Human).